A 504-amino-acid chain; its full sequence is Aromatic and large neutral amino acid transporter 5-3 (504 aa).

The tract at residues 1-24 (MESTEATMVERKAESPSSGDRARS) is disordered. Over residues 8-24 (MVERKAESPSSGDRARS) the composition is skewed to basic and acidic residues. 6 helical membrane passes run 76 to 96 (YVVL…FMNW), 138 to 158 (HLFT…GIML), 165 to 185 (FGAL…GFSS), 206 to 226 (FFPC…IIAV), 233 to 253 (ISFI…GATF), and 256 to 276 (VMLG…LFII). A glycan (N-linked (GlcNAc...) asparagine) is linked at asparagine 310. The next 6 membrane-spanning stretches (helical) occupy residues 324-344 (LSFL…LFFA), 356-376 (EANQ…GGIA), 381-401 (IVPV…LMLI), 406-426 (CFAA…SFLV), 436-456 (IFYP…GGII), and 475-495 (MTVL…FMYV).

Belongs to the SLC43A transporter (TC 2.A.1.44) family.

The protein resides in the cell membrane. It catalyses the reaction L-tyrosine(in) = L-tyrosine(out). L-tyrosine uptake is stimulated in trans by aromatic and large neutral amino acids, but not smaller or charged amino acids. L-tyrosine transporter that is essential for parasite survival and virulence. May also act as an aromatic and large neutral amino acid transporter. Does not cotransport other charged ions. Involved in amino acid homeostasis by facilitating the net uptake of L-tyrosine and maintaining intracellular pools of aromatic and large neutral amino acids through exchange. This Toxoplasma gondii protein is Aromatic and large neutral amino acid transporter 5-3.